Consider the following 125-residue polypeptide: Ribosome-binding factor A (125 aa).

The protein belongs to the RbfA family. As to quaternary structure, monomer. Binds 30S ribosomal subunits, but not 50S ribosomal subunits or 70S ribosomes.

The protein resides in the cytoplasm. In terms of biological role, one of several proteins that assist in the late maturation steps of the functional core of the 30S ribosomal subunit. Associates with free 30S ribosomal subunits (but not with 30S subunits that are part of 70S ribosomes or polysomes). Required for efficient processing of 16S rRNA. May interact with the 5'-terminal helix region of 16S rRNA. The chain is Ribosome-binding factor A from Xylella fastidiosa (strain M12).